A 67-amino-acid polypeptide reads, in one-letter code: Conotoxin Cl14.2b (67 aa).

Residues 1–20 form the signal peptide; the sequence is MNVTVMFLVLLLLTMPLTDG. A propeptide spanning residues 21–48 is cleaved from the precursor; it reads FNIRATNGGELFGPVQRDAGNVLDHGFQ.

The protein belongs to the conotoxin L superfamily. Contains 2 disulfide bonds. In terms of tissue distribution, expressed by the venom duct.

The protein resides in the secreted. Its function is as follows. Increases calcium current amplitude through Cav1.2/Cav1.3 channels in rat pancreatic beta-cells, which is a prerequisite for eliciting insulin secretion. Stimulates insulin secretion in NIT-1 insulinoma cell lines. In vivo, significantly decreases mice blood glucose levels as of 45 minutes after treatment, similarly to insulin treatment. Has a potential therapeutic use in endocrinal pathologies such as early stages of type 2 diabetes where the pancreas's capability to produce insulin is still effective. The chain is Conotoxin Cl14.2b from Californiconus californicus (California cone).